The primary structure comprises 788 residues: Endonuclease MutS2 (788 aa).

334–341 (GPNTGGKT) serves as a coordination point for ATP. The 76-residue stretch at 713-788 (LDLRGKRYEE…GNGATVVKFQ (76 aa)) folds into the Smr domain.

Belongs to the DNA mismatch repair MutS family. MutS2 subfamily. In terms of assembly, homodimer. Binds to stalled ribosomes, contacting rRNA.

Its function is as follows. Endonuclease that is involved in the suppression of homologous recombination and thus may have a key role in the control of bacterial genetic diversity. Functionally, acts as a ribosome collision sensor, splitting the ribosome into its 2 subunits. Detects stalled/collided 70S ribosomes which it binds and splits by an ATP-hydrolysis driven conformational change. Acts upstream of the ribosome quality control system (RQC), a ribosome-associated complex that mediates the extraction of incompletely synthesized nascent chains from stalled ribosomes and their subsequent degradation. Probably generates substrates for RQC. The polypeptide is Endonuclease MutS2 (Enterococcus faecalis (strain ATCC 700802 / V583)).